Here is a 158-residue protein sequence, read N- to C-terminus: NAD(P)H-quinone oxidoreductase subunit J, chloroplastic (158 aa).

This sequence belongs to the complex I 30 kDa subunit family. As to quaternary structure, NDH is composed of at least 16 different subunits, 5 of which are encoded in the nucleus.

Its subcellular location is the plastid. It localises to the chloroplast thylakoid membrane. The catalysed reaction is a plastoquinone + NADH + (n+1) H(+)(in) = a plastoquinol + NAD(+) + n H(+)(out). It catalyses the reaction a plastoquinone + NADPH + (n+1) H(+)(in) = a plastoquinol + NADP(+) + n H(+)(out). Its function is as follows. NDH shuttles electrons from NAD(P)H:plastoquinone, via FMN and iron-sulfur (Fe-S) centers, to quinones in the photosynthetic chain and possibly in a chloroplast respiratory chain. The immediate electron acceptor for the enzyme in this species is believed to be plastoquinone. Couples the redox reaction to proton translocation, and thus conserves the redox energy in a proton gradient. This is NAD(P)H-quinone oxidoreductase subunit J, chloroplastic from Amborella trichopoda.